We begin with the raw amino-acid sequence, 761 residues long: MLGREFYSNVSHVEQGERYTVSHHGSTEDTRQGGNDDLQNTPARSNASTDYSTQSLSNQAGMQPAARRTSMVTEGHVARSQQPLTVNTDFFRGTDQPNATPHPQADPARYAYDSHFHPNTEIANFQTPQMHNYHPYHPNLYHHQYPMHNPSPLHHLQQARVGQMIYQTDPANPSGFPQASPSDLSTTSSQSYYHTGRSSPSVSSSTCSSPVELEDLSVPAKTRPADGFTNLQRTTCPDFSIPSTEQCMQELTPRIRPPSAEQQAPSIGASPPQEFSKASVFLCNSELWRKFHEHRTEMIITKQGRRMFPQLVFRLSGLNPAAHYNVFVDMVIADPNSWKFQSGKWVATGKSDGVPRATGIFKHPDSPNTGEHWMRQDIAFSKLKLTNNRGKDSGYLVINSMHIYQPRIHVLDLTGARVLQTHSFPETQFIGVTAYQNTDITQLKIDHNPFAKGFRDNYDSFATRERLSYVASLQEQRNRTKPVQCTAANAIIPSDTTGFPCQTNPTQRSNGQHEGRPLPMKLIRASEPCSSTNLAPACNSGSGMSGDAICSDSAPSSTIRHSPKSIGEREGALPNLGALNNSGHPGSVLDTPPNQSPHGGCERSNEKHTPAHKLGEGLGCGMLECGEIPWLNTPPSVCSSDNSNPDLPSAKRLRISPAGSGSPSVTSGTSLFTSGSSAAPSPPLLTTAPTAHIAPGLDSTLSTEGVVQCSNRSLVMPQPYYGVGGSFAYQNDSHMGYSYMGQTRQGLNLATSAPYYYQQNN.

Disordered stretches follow at residues 1–85 (MLGR…QPLT) and 167–210 (QTDP…CSSP). Composition is skewed to polar residues over residues 37-61 (DLQN…NQAG) and 167-179 (QTDP…FPQA). 2 stretches are compositionally biased toward low complexity: residues 180–191 (SPSDLSTTSSQS) and 198–210 (SSPS…CSSP). A DNA-binding region (T-box) is located at residues 287–456 (LWRKFHEHRT…HNPFAKGFRD (170 aa)). Polar residues predominate over residues 496-510 (TTGFPCQTNPTQRSN). Disordered stretches follow at residues 496–515 (TTGF…QHEG), 545–612 (SGDA…TPAH), and 637–687 (VCSS…LLTT). The segment covering 600–612 (GCERSNEKHTPAH) has biased composition (basic and acidic residues). The segment covering 637–646 (VCSSDNSNPD) has biased composition (polar residues). The span at 656-687 (SPAGSGSPSVTSGTSLFTSGSSAAPSPPLLTT) shows a compositional bias: low complexity.

The protein resides in the nucleus. In terms of biological role, probable transcriptional regulator involved in developmental processes. In Patiria pectinifera (Starfish), this protein is T-box protein 1 (tbr1).